The primary structure comprises 990 residues: Fibronectin-binding protein A (990 aa).

An N-terminal signal peptide occupies residues 1–35 (MKNNLRYGIRKHKLGAASVFLGTMIVVGMGQDKEA). Positions 7 to 18 (YGIRKHKLGAAS) match the YSIRK-G/S signaling motif motif. Disordered stretches follow at residues 33–61 (KEAA…SETQ) and 96–193 (PKAV…TEVK). Positions 37–55 (TSEQKTTTVEENGNSATDN) are enriched in polar residues. A ligand-binding A region region spans residues 37 to 511 (TSEQKTTTVE…SNKADGNGKN (475 aa)). Composition is skewed to basic and acidic residues over residues 112 to 126 (TVKE…KPQV) and 179 to 193 (DVAE…TEVK). Residues 194–511 (GTDVTSKVTV…SNKADGNGKN (318 aa)) are fibrinogen/elastin/tropoelastin-binding. The tract at residues 512-834 (GQIIQNNDFE…EGQQTIEEDT (323 aa)) is fibronectin-binding. The stretch at 545–574 (ENQDNTPLDIDYHTAIDGEGGYADGYIETI) is one B-1 repeat. Residues 545–604 (ENQDNTPLDIDYHTAIDGEGGYADGYIETIEETDSSAIDIDYHTAVDSEAGHVGGYTESS) form a 2 X approximate tandem repeats region. A B-2 repeat occupies 575–604 (EETDSSAIDIDYHTAVDSEAGHVGGYTESS). The segment at 702–969 (LGYEGGQNSG…EESTNKGMLF (268 aa)) is disordered. A D-1 repeat occupies 707 to 744 (GQNSGNQSFEEDTEEDKPKYEQGGNIVDIDFDSVPQIQ). Positions 707–850 (GQNSGNQSFE…TPEVPSEPET (144 aa)) are 4 X approximate tandem repeats. The span at 741–752 (PQIQGQNNGNQS) shows a compositional bias: polar residues. The D-2 repeat unit spans residues 745 to 782 (GQNNGNQSFEEDTEKDKPKYEQGGNIIDIDFDSVPQIH). A D-3 repeat occupies 783–821 (GFNKHNEIIEEDTNKDKPNYQFGGHNSVDFEEDTLPKVS). The span at 786–800 (KHNEIIEEDTNKDKP) shows a compositional bias: basic and acidic residues. The D-4; truncated repeat unit spans residues 822–850 (GQNEGQQTIEEDTTPPTPPTPEVPSEPET). A compositionally biased stretch (pro residues) spans 836 to 910 (PPTPPTPEVP…PAEPGKPVPP (75 aa)). 5 WR repeats span residues 851–864 (PTPP…EPET), 865–878 (PTPP…EPET), 879–892 (PTPP…EPET), 893–906 (PTPP…EPGK), and 907–920 (PVPP…KPSK). Residues 851–920 (PTPPTPEVPS…AEEEPKKPSK (70 aa)) are 5 X tandem repeats, Pro-rich (WR). An LPXTG sorting signal motif is present at residues 954–958 (LPETG). Position 957 is a pentaglycyl murein peptidoglycan amidated threonine (Thr957). Residues 958–990 (GGEESTNKGMLFGGLFSILGLALLRRNKKNHKA) constitute a propeptide, removed by sortase.

The protein localises to the secreted. It localises to the cell wall. In terms of biological role, promotes bacterial attachment to multiple substrates, such as fibronectin (Fn), fibrinogen (Fg), elastin peptides and tropoelastin. This confers to S.aureus the ability to invade endothelial cells. Promotes adherence to and aggregation of activated platelets. The protein is Fibronectin-binding protein A (fnbA) of Staphylococcus aureus (strain bovine RF122 / ET3-1).